We begin with the raw amino-acid sequence, 394 residues long: MSKEKFERSKPHVNVGTIGHVDHGKTTLTAAITTVLAKTYGGSARAFDQIDNAPEEKARGITINTSHVEYDTPSRHYAHVDCPGHADYVKNMITGAAQMDGAILVVAATDGPMPQTREHILLGRQVGVPFIIVFMNKCDMVDDEELLELVEMEVRELLSAYDFPGDDLPVVRGSALKALEGEAEWEAKIIELAGYLDSYIPEPERAIDKPFLLPIEDVFSISGRGTVVTGRVERGIVKVGEEVEIVGIKDTVKSTCTGVEMFRKLLDEGRAGENVGVLLRGIKREDIERGQVLAKPGSIKPHTKFDSEVYILSKEEGGRHTPFFKGYRPQFYFRTTDVTGTIELPEGVEMVMPGDNVNMVVTLIHPIAMDDGLRFAIREGGRTVGAGVVAKVIA.

The tr-type G domain occupies 10–204 (KPHVNVGTIG…YLDSYIPEPE (195 aa)). The segment at 19 to 26 (GHVDHGKT) is G1. Residue 19-26 (GHVDHGKT) participates in GTP binding. T26 provides a ligand contact to Mg(2+). A G2 region spans residues 60-64 (GITIN). Residues 81-84 (DCPG) form a G3 region. Residues 81 to 85 (DCPGH) and 136 to 139 (NKCD) contribute to the GTP site. Residues 136 to 139 (NKCD) are G4. The G5 stretch occupies residues 174–176 (SAL).

This sequence belongs to the TRAFAC class translation factor GTPase superfamily. Classic translation factor GTPase family. EF-Tu/EF-1A subfamily. Monomer.

It localises to the cytoplasm. It carries out the reaction GTP + H2O = GDP + phosphate + H(+). In terms of biological role, GTP hydrolase that promotes the GTP-dependent binding of aminoacyl-tRNA to the A-site of ribosomes during protein biosynthesis. This chain is Elongation factor Tu 2, found in Serratia proteamaculans (strain 568).